A 199-amino-acid chain; its full sequence is Peroxiredoxin-1 (199 aa).

Serine 2 carries the N-acetylserine modification. The 160-residue stretch at 6 to 165 (AKIGHPAPNF…TLRLVQAFQF (160 aa)) folds into the Thioredoxin domain. Lysine 7 carries the N6-acetyllysine; alternate modification. Residue lysine 7 forms a Glycyl lysine isopeptide (Lys-Gly) (interchain with G-Cter in SUMO2); alternate linkage. Lysine 16 and lysine 27 each carry N6-acetyllysine. At serine 32 the chain carries Phosphoserine. The residue at position 35 (lysine 35) is an N6-acetyllysine; alternate. An N6-succinyllysine; alternate modification is found at lysine 35. The Cysteine sulfenic acid (-SOH) intermediate role is filled by cysteine 52. At threonine 90 the chain carries Phosphothreonine. Lysine 120 participates in a covalent cross-link: Glycyl lysine isopeptide (Lys-Gly) (interchain with G-Cter in SUMO2). At lysine 136 the chain carries N6-acetyllysine. Positions 176–199 (GWKPGSDTIKPDVQKSKEYFSKQK) are disordered. Over residues 184–199 (IKPDVQKSKEYFSKQK) the composition is skewed to basic and acidic residues. Residue lysine 185 forms a Glycyl lysine isopeptide (Lys-Gly) (interchain with G-Cter in SUMO1) linkage. The residue at position 197 (lysine 197) is an N6-acetyllysine.

The protein belongs to the peroxiredoxin family. AhpC/Prx1 subfamily. In terms of assembly, homodimer; disulfide-linked, upon oxidation. 5 homodimers assemble to form a ring-like decamer. Interacts with GDPD5; forms a mixed-disulfide with GDPD5. Interacts with SESN1 and SESN2. Interacts with FAM107A. Phosphorylated on Thr-90 during the M-phase, which leads to a decrease in enzymatic activity. In terms of processing, acetylation increases reducing activity and resistance to superoxidation. Deacetylated by HDAC6 which decreases reducing activity. As to expression, detected in heart and skeletal muscle (at protein level).

The protein resides in the cytoplasm. The enzyme catalyses a hydroperoxide + [thioredoxin]-dithiol = an alcohol + [thioredoxin]-disulfide + H2O. Its function is as follows. Thiol-specific peroxidase that catalyzes the reduction of hydrogen peroxide and organic hydroperoxides to water and alcohols, respectively. Plays a role in cell protection against oxidative stress by detoxifying peroxides and as sensor of hydrogen peroxide-mediated signaling events. Might participate in the signaling cascades of growth factors and tumor necrosis factor-alpha by regulating the intracellular concentrations of H(2)O(2). Reduces an intramolecular disulfide bond in GDPD5 that gates the ability to GDPD5 to drive postmitotic motor neuron differentiation. The protein is Peroxiredoxin-1 (PRDX1) of Myotis lucifugus (Little brown bat).